The primary structure comprises 348 residues: MAVSSIASIFAAEKSYSIPPVCQLLVSPVLNPLYDAKAESQIDAWCAEFLKLQPGSEKAVFVQESRLGLLAAYVYPTIPYEKIVPVGKFFASFFLADDILDSPEISSSDMRNVATAYKMVLKGRFDEATLPVKNPELLRQMKMLSEVLEELSLHVVDESGRFVDAMTRVLDMFEIESSWLRKQIIPNLDTYLWLREITSGVAPCFALIDGLLQLRLEERGVLDHPLIRKVEEIGTHHIALHNDLMSLRKEWATGNYLNAVPILASNRKCGLNEAIGKVASMLKDLEKDFARTKHEIISSGLAMKQGVMDYVNGIEVWMAGNVEWGWTSARYHGIGWIPPPEKSGTFQL.

Aspartate 97, aspartate 101, asparagine 242, and serine 246 together coordinate Mg(2+). Positions 97 to 101 (DDILD) match the DDXXD motif motif.

This sequence belongs to the terpene synthase family. Requires Mg(2+) as cofactor.

It catalyses the reaction (2E,6E)-farnesyl diphosphate = (+)-germacrene D + diphosphate. Its pathway is secondary metabolite biosynthesis; terpenoid biosynthesis. Sesquiterpene synthase converting farnesyl diphosphate to eight sesquiterpenes, with (+)-germacrene D and an unidentified oxygenated sesquiterpene as the major products. Has no diterpene synthase activity. This is (+)-germacrene D synthase from Selaginella moellendorffii (Spikemoss).